The primary structure comprises 138 residues: Transcription antitermination protein NusB (138 aa).

Belongs to the NusB family.

In terms of biological role, involved in transcription antitermination. Required for transcription of ribosomal RNA (rRNA) genes. Binds specifically to the boxA antiterminator sequence of the ribosomal RNA (rrn) operons. The protein is Transcription antitermination protein NusB of Helicobacter pylori (strain ATCC 700392 / 26695) (Campylobacter pylori).